Here is a 303-residue protein sequence, read N- to C-terminus: UDP-N-acetylenolpyruvoylglucosamine reductase (303 aa).

Residues 29 to 196 (KIGGPADILI…LEAVLQLEQK (168 aa)) form the FAD-binding PCMH-type domain. Arg-174 is an active-site residue. Catalysis depends on Ser-225, which acts as the Proton donor. The active site involves Glu-295.

This sequence belongs to the MurB family. The cofactor is FAD.

The protein resides in the cytoplasm. It catalyses the reaction UDP-N-acetyl-alpha-D-muramate + NADP(+) = UDP-N-acetyl-3-O-(1-carboxyvinyl)-alpha-D-glucosamine + NADPH + H(+). It participates in cell wall biogenesis; peptidoglycan biosynthesis. Its function is as follows. Cell wall formation. This chain is UDP-N-acetylenolpyruvoylglucosamine reductase, found in Bacillus velezensis (strain DSM 23117 / BGSC 10A6 / LMG 26770 / FZB42) (Bacillus amyloliquefaciens subsp. plantarum).